Reading from the N-terminus, the 502-residue chain is TNF receptor-associated factor family protein DDB_G0268444 (502 aa).

Residues 28 to 68 (CSICYESVYKKEIYQCKEIHWFCKTCWAESLFKKKECMICR) form an RING-type; degenerate zinc finger. 2 TRAF-type zinc fingers span residues 129-183 (KHLK…SRSL) and 185-243 (NHYK…PKSN). The stretch at 261 to 295 (IESQSLQIKETNIKYENLLNKINKLEQLETESKCD) forms a coiled coil. The region spanning 368–489 (KYKNRWSISN…DDSLVIDFSI (122 aa)) is the MATH domain.

Belongs to the TNF receptor-associated factor family. A subfamily.

The protein localises to the cytoplasm. Probable adapter protein and signal transducer that links members of the tumor necrosis factor receptor family to different signaling pathways by association with the receptor cytoplasmic domain and kinases. This is TNF receptor-associated factor family protein DDB_G0268444 from Dictyostelium discoideum (Social amoeba).